The following is a 34-amino-acid chain: Papillosin (34 aa).

Its function is as follows. Has strong antibacterial activity against the Gram-positive bacteria M.luteus, S.aureus, B.megaterium, A.viridans and E.faecalis, and against the Gram-negative bacteria K.pneumoniae, E.coli DH5alpha, S.typhimurium, P.aeruginosa and E.aerogenes. Lacks hemolytic activity against sheep erythrocytes. This Halocynthia papillosa (Red sea-squirt) protein is Papillosin.